The primary structure comprises 136 residues: UPF0225 protein Mpe_A2093 (136 aa).

The protein belongs to the UPF0225 family.

This Methylibium petroleiphilum (strain ATCC BAA-1232 / LMG 22953 / PM1) protein is UPF0225 protein Mpe_A2093.